The sequence spans 404 residues: Cysteine desulfurase IscS (404 aa).

Residues 75–76 (AT), N155, Q183, and 203–205 (SAH) contribute to the pyridoxal 5'-phosphate site. An N6-(pyridoxal phosphate)lysine modification is found at K206. Residue T243 coordinates pyridoxal 5'-phosphate. The active-site Cysteine persulfide intermediate is the C328. C328 is a binding site for [2Fe-2S] cluster.

It belongs to the class-V pyridoxal-phosphate-dependent aminotransferase family. NifS/IscS subfamily. As to quaternary structure, homodimer. Forms a heterotetramer with IscU, interacts with other sulfur acceptors. It depends on pyridoxal 5'-phosphate as a cofactor.

The protein resides in the cytoplasm. It catalyses the reaction (sulfur carrier)-H + L-cysteine = (sulfur carrier)-SH + L-alanine. It functions in the pathway cofactor biosynthesis; iron-sulfur cluster biosynthesis. Master enzyme that delivers sulfur to a number of partners involved in Fe-S cluster assembly, tRNA modification or cofactor biosynthesis. Catalyzes the removal of elemental sulfur atoms from cysteine to produce alanine. Functions as a sulfur delivery protein for Fe-S cluster synthesis onto IscU, an Fe-S scaffold assembly protein, as well as other S acceptor proteins. The polypeptide is Cysteine desulfurase IscS (Pseudomonas entomophila (strain L48)).